Here is a 410-residue protein sequence, read N- to C-terminus: Cytochrome P450(BM-1) (410 aa).

Cys356 lines the heme pocket.

The protein belongs to the cytochrome P450 family. The cofactor is heme.

Its subcellular location is the cytoplasm. In terms of biological role, cytochromes P450 are a group of heme-thiolate monooxygenases. They oxidize a variety of structurally unrelated compounds, including steroids, fatty acids, and xenobiotics. This chain is Cytochrome P450(BM-1) (cyp106), found in Priestia megaterium (strain ATCC 14581 / DSM 32 / CCUG 1817 / JCM 2506 / NBRC 15308 / NCIMB 9376 / NCTC 10342 / NRRL B-14308 / VKM B-512 / Ford 19) (Bacillus megaterium).